The primary structure comprises 66 residues: Large ribosomal subunit protein bL35 (66 aa).

This sequence belongs to the bacterial ribosomal protein bL35 family.

This chain is Large ribosomal subunit protein bL35, found in Thermomicrobium roseum (strain ATCC 27502 / DSM 5159 / P-2).